Reading from the N-terminus, the 228-residue chain is MKDFKKKIIMKISRIEYKHTAFSAEYKDVEKVYKKLRDNMDKVATGINNLMTYEHGGSAMKKIYHGLSMVSSASRMNYFSDADIFEGFARINKDLTDSDLDEGVREVGRKTAEAYENISKAKEKFNEQCGREMEVLMSMKKRAETTDKERENAKIYRYDLEKAKQSNNPEDQEEVDRLSELFENSQTRTIEMMRDFIGADGLQGVLTRVRDLNIEFHQESVKALERTK.

N-linked (GlcNAc...) asparagine glycosylation occurs at N117.

It belongs to the SWP12 family.

The protein resides in the spore wall. This is Spore wall protein 12 (SWP12) from Nosema bombycis (strain CQ1 / CVCC 102059) (Microsporidian parasite).